The chain runs to 453 residues: Bifunctional protein GlmU (453 aa).

Residues 1 to 226 are pyrophosphorylase; sequence MFAIAILAAG…IDEVSGVNDR (226 aa). Residues 7–10, Lys21, Gln73, and 78–79 contribute to the UDP-N-acetyl-alpha-D-glucosamine site; these read LAAG and GT. A Mg(2+)-binding site is contributed by Asp103. UDP-N-acetyl-alpha-D-glucosamine is bound by residues Gly140, Glu155, Asn170, and Asn224. Asn224 contributes to the Mg(2+) binding site. The tract at residues 227–247 is linker; the sequence is AQLANCENLIQQSLRNHWMSK. Residues 248-453 form an N-acetyltransferase region; that stretch reads GVSFIDPESC…NWKTREETNQ (206 aa). UDP-N-acetyl-alpha-D-glucosamine contacts are provided by Arg329 and Lys347. Residue His359 is the Proton acceptor of the active site. Tyr362 and Asn373 together coordinate UDP-N-acetyl-alpha-D-glucosamine. Residues Ala376, Ala419, and Arg436 each contribute to the acetyl-CoA site.

It in the N-terminal section; belongs to the N-acetylglucosamine-1-phosphate uridyltransferase family. The protein in the C-terminal section; belongs to the transferase hexapeptide repeat family. Homotrimer. It depends on Mg(2+) as a cofactor.

The protein localises to the cytoplasm. It catalyses the reaction alpha-D-glucosamine 1-phosphate + acetyl-CoA = N-acetyl-alpha-D-glucosamine 1-phosphate + CoA + H(+). The enzyme catalyses N-acetyl-alpha-D-glucosamine 1-phosphate + UTP + H(+) = UDP-N-acetyl-alpha-D-glucosamine + diphosphate. It participates in nucleotide-sugar biosynthesis; UDP-N-acetyl-alpha-D-glucosamine biosynthesis; N-acetyl-alpha-D-glucosamine 1-phosphate from alpha-D-glucosamine 6-phosphate (route II): step 2/2. It functions in the pathway nucleotide-sugar biosynthesis; UDP-N-acetyl-alpha-D-glucosamine biosynthesis; UDP-N-acetyl-alpha-D-glucosamine from N-acetyl-alpha-D-glucosamine 1-phosphate: step 1/1. The protein operates within bacterial outer membrane biogenesis; LPS lipid A biosynthesis. In terms of biological role, catalyzes the last two sequential reactions in the de novo biosynthetic pathway for UDP-N-acetylglucosamine (UDP-GlcNAc). The C-terminal domain catalyzes the transfer of acetyl group from acetyl coenzyme A to glucosamine-1-phosphate (GlcN-1-P) to produce N-acetylglucosamine-1-phosphate (GlcNAc-1-P), which is converted into UDP-GlcNAc by the transfer of uridine 5-monophosphate (from uridine 5-triphosphate), a reaction catalyzed by the N-terminal domain. This is Bifunctional protein GlmU from Prochlorococcus marinus (strain MIT 9211).